The following is a 370-amino-acid chain: Putative F-box/kelch-repeat protein At3g46050 (370 aa).

One can recognise an F-box domain in the interval P15–R61. Kelch repeat units lie at residues K119–D165 and I167–S212.

This is Putative F-box/kelch-repeat protein At3g46050 from Arabidopsis thaliana (Mouse-ear cress).